Here is a 161-residue protein sequence, read N- to C-terminus: Large ribosomal subunit protein bL9 (161 aa).

Belongs to the bacterial ribosomal protein bL9 family.

In terms of biological role, binds to the 23S rRNA. The protein is Large ribosomal subunit protein bL9 of Protochlamydia amoebophila (strain UWE25).